A 243-amino-acid chain; its full sequence is 3-deoxy-manno-octulosonate cytidylyltransferase (243 aa).

This sequence belongs to the KdsB family.

The protein resides in the cytoplasm. It carries out the reaction 3-deoxy-alpha-D-manno-oct-2-ulosonate + CTP = CMP-3-deoxy-beta-D-manno-octulosonate + diphosphate. It functions in the pathway nucleotide-sugar biosynthesis; CMP-3-deoxy-D-manno-octulosonate biosynthesis; CMP-3-deoxy-D-manno-octulosonate from 3-deoxy-D-manno-octulosonate and CTP: step 1/1. The protein operates within bacterial outer membrane biogenesis; lipopolysaccharide biosynthesis. Functionally, activates KDO (a required 8-carbon sugar) for incorporation into bacterial lipopolysaccharide in Gram-negative bacteria. This chain is 3-deoxy-manno-octulosonate cytidylyltransferase, found in Helicobacter pylori (strain J99 / ATCC 700824) (Campylobacter pylori J99).